The primary structure comprises 1070 residues: Carbamoyl phosphate synthase large chain (1070 aa).

Residues 1–401 form a carboxyphosphate synthetic domain region; the sequence is MPKRDDIKTI…ALLKAVRSLE (401 aa). Arginine 129, arginine 169, glycine 175, glycine 176, lysine 208, isoleucine 210, glutamate 215, glycine 241, isoleucine 242, histidine 243, glutamine 284, and glutamate 298 together coordinate ATP. The region spanning 133–327 is the ATP-grasp 1 domain; sequence RDLMNELGEP…IAKLAAKIAV (195 aa). The Mg(2+) site is built by glutamine 284, glutamate 298, and asparagine 300. 3 residues coordinate Mn(2+): glutamine 284, glutamate 298, and asparagine 300. An oligomerization domain region spans residues 402–546; that stretch reads IGADHLLLEE…YSTYEEENES (145 aa). The interval 547-929 is carbamoyl phosphate synthetic domain; the sequence is TRSAKESVIV…ALYKGFVASG (383 aa). The 191-residue stretch at 671-861 folds into the ATP-grasp 2 domain; the sequence is EKALEILQIP…MANVATRVIL (191 aa). Arginine 707, arginine 746, valine 748, glutamate 752, glycine 777, valine 778, histidine 779, serine 780, glutamine 820, and glutamate 832 together coordinate ATP. The Mg(2+) site is built by glutamine 820, glutamate 832, and asparagine 834. The Mn(2+) site is built by glutamine 820, glutamate 832, and asparagine 834. Residues 930–1070 enclose the MGS-like domain; it reads TTMHDYGTVL…SEVKQPKARV (141 aa). The segment at 930 to 1070 is allosteric domain; sequence TTMHDYGTVL…SEVKQPKARV (141 aa).

This sequence belongs to the CarB family. Composed of two chains; the small (or glutamine) chain promotes the hydrolysis of glutamine to ammonia, which is used by the large (or ammonia) chain to synthesize carbamoyl phosphate. Tetramer of heterodimers (alpha,beta)4. Mg(2+) is required as a cofactor. It depends on Mn(2+) as a cofactor.

It catalyses the reaction hydrogencarbonate + L-glutamine + 2 ATP + H2O = carbamoyl phosphate + L-glutamate + 2 ADP + phosphate + 2 H(+). The enzyme catalyses hydrogencarbonate + NH4(+) + 2 ATP = carbamoyl phosphate + 2 ADP + phosphate + 2 H(+). The protein operates within amino-acid biosynthesis; L-arginine biosynthesis; carbamoyl phosphate from bicarbonate: step 1/1. It functions in the pathway pyrimidine metabolism; UMP biosynthesis via de novo pathway; (S)-dihydroorotate from bicarbonate: step 1/3. Large subunit of the glutamine-dependent carbamoyl phosphate synthetase (CPSase). CPSase catalyzes the formation of carbamoyl phosphate from the ammonia moiety of glutamine, carbonate, and phosphate donated by ATP, constituting the first step of 2 biosynthetic pathways, one leading to arginine and/or urea and the other to pyrimidine nucleotides. The large subunit (synthetase) binds the substrates ammonia (free or transferred from glutamine from the small subunit), hydrogencarbonate and ATP and carries out an ATP-coupled ligase reaction, activating hydrogencarbonate by forming carboxy phosphate which reacts with ammonia to form carbamoyl phosphate. The chain is Carbamoyl phosphate synthase large chain from Listeria monocytogenes serotype 4a (strain HCC23).